The following is a 406-amino-acid chain: Exo-alpha-sialidase (406 aa).

The N-terminal stretch at 1–20 is a signal peptide; that stretch reads MQSMRFMILALLVQFLPAWA. Substrate-binding residues include Arg59, Arg78, Asp84, and Gln148. An N-linked (GlcNAc...) asparagine glycan is attached at Asn235. Substrate is bound by residues Arg265, Arg322, 322–323, 331–332, Lys337, Tyr358, Asp376, and 376–378; these read RR, YD, and DFF. Asn396 carries N-linked (GlcNAc...) asparagine glycosylation.

It belongs to the glycosyl hydrolase 33 family.

It carries out the reaction Hydrolysis of alpha-(2-&gt;3)-, alpha-(2-&gt;6)-, alpha-(2-&gt;8)- glycosidic linkages of terminal sialic acid residues in oligosaccharides, glycoproteins, glycolipids, colominic acid and synthetic substrates.. Its function is as follows. Sialidase is able to release sialic acid from a wide variety of natural substrates including bovine salivary mucin, colominic acid, bovine fetuin, a serum glycoprotein containing both alpha-2-6 and alpha-2-3-linkages in a ratio of about 3:2, and glycoproteins and glycolipids from thermally denatured human lung epithelial cells. Does not show any trans-sialidase activity since it is able to remove terminal sialic acid residues but is unable to catalyze their transfer to the acceptor substrate. 2-keto-3-deoxynononic acid (KDN) is the preferred substrate and A.fumigatus can utilize KDN as a sole carbon source. This is Exo-alpha-sialidase from Aspergillus fumigatus (strain ATCC MYA-4609 / CBS 101355 / FGSC A1100 / Af293) (Neosartorya fumigata).